The primary structure comprises 443 residues: ATP-dependent protease ATPase subunit HslU (443 aa).

ATP is bound by residues Ile-18, 60–65 (GVGKTE), Asp-256, Glu-321, and Arg-393.

The protein belongs to the ClpX chaperone family. HslU subfamily. In terms of assembly, a double ring-shaped homohexamer of HslV is capped on each side by a ring-shaped HslU homohexamer. The assembly of the HslU/HslV complex is dependent on binding of ATP.

It is found in the cytoplasm. Its function is as follows. ATPase subunit of a proteasome-like degradation complex; this subunit has chaperone activity. The binding of ATP and its subsequent hydrolysis by HslU are essential for unfolding of protein substrates subsequently hydrolyzed by HslV. HslU recognizes the N-terminal part of its protein substrates and unfolds these before they are guided to HslV for hydrolysis. The sequence is that of ATP-dependent protease ATPase subunit HslU from Pectobacterium carotovorum subsp. carotovorum (strain PC1).